The following is a 123-amino-acid chain: UPF0102 protein Pcar_2217 (123 aa).

The protein belongs to the UPF0102 family.

The polypeptide is UPF0102 protein Pcar_2217 (Syntrophotalea carbinolica (strain DSM 2380 / NBRC 103641 / GraBd1) (Pelobacter carbinolicus)).